Consider the following 487-residue polypeptide: L-tartrate/succinate antiporter (487 aa).

Transmembrane regions (helical) follow at residues 10-30 (YLAPLAVIAIIALLPVPAGLE), 33-53 (TWLYFAVFTGVIVGLILEPVP), 54-74 (GAVVAMVGISIIAILSPWLLF), 93-113 (WAVSGFSNSVIWLIFAAFMFG), 137-157 (TLFLGYAVMFSELILAPVTPS), 189-209 (IGSYIMWMGIVADCVTSAIFL), 236-256 (FLGMLPLSILLVLLVPWLAYV), 292-312 (LMVGALVLWIFGGDYIDAAMV), 313-333 (GYSVVALMLLLRIISWDDIVS), 340-360 (VFFWLASLITLATGLNNTGFI), 370-390 (SLSGYSPTMVMVTLIVVFYLL), 393-413 (FFASATAYTCALAPMMIAAAL), 418-438 (IPLPVFCLMVGAAIGLGSILT), and 465-485 (IFGLIFLVLLVITGLLWMPVV).

Belongs to the SLC13A/DASS transporter (TC 2.A.47) family. DIT1 subfamily.

The protein resides in the cell inner membrane. It catalyses the reaction (2R,3R)-tartrate(out) + succinate(in) = (2R,3R)-tartrate(in) + succinate(out). Catalyzes the uptake of tartrate in exchange for intracellular succinate. Essential for anaerobic L-tartrate fermentation. In Shigella flexneri, this protein is L-tartrate/succinate antiporter (ttdT).